A 280-amino-acid polypeptide reads, in one-letter code: F-actin-capping protein subunit alpha (280 aa).

This sequence belongs to the F-actin-capping protein alpha subunit family. As to quaternary structure, heterodimer of an alpha and a beta subunit.

Its subcellular location is the cytoplasm. It is found in the cytoskeleton. In terms of biological role, F-actin-capping proteins bind in a Ca(2+)-independent manner to the fast growing ends of actin filaments (barbed end) thereby blocking the exchange of subunits at these ends. Unlike other capping proteins (such as gelsolin and severin), these proteins do not sever actin filaments. This is F-actin-capping protein subunit alpha (CAP01) from Candida albicans (strain SC5314 / ATCC MYA-2876) (Yeast).